The chain runs to 124 residues: Putative iron-sulfur cluster insertion protein ErpA (124 aa).

The iron-sulfur cluster site is built by C52, C116, and C118.

This sequence belongs to the HesB/IscA family. Homodimer. Iron-sulfur cluster is required as a cofactor.

In terms of biological role, required for insertion of 4Fe-4S clusters. This Delftia acidovorans (strain DSM 14801 / SPH-1) protein is Putative iron-sulfur cluster insertion protein ErpA.